The sequence spans 498 residues: MEKYILSIDQGTTSSRAILFNQKGEIAGVAQREFKQYFPQSGWVEHDANEIWTSVLAVMTEVINENDVRADQIAGIGITNQRETTVVWDKHTGRPIYHAIVWQSRQTQSICSELKQQGYEQTFRDKTGLLLDPYFAGTKVKWILDNVEGAREKAENGDLLFGTIDTWLVWKLSGKAAHITDYSNASRTLMFNIHDLEWDDELLELLTVPKNMLPEVKPSSEVYGKTIDYHFYGQEVPIAGVAGDQQAALFGQACFERGDVKNTYGTGGFMLMNTGDKAVKSESGLLTTIAYGIDGKVNYALEGSIFVSGSAIQWLRDGLRMINSAPQSESYATRVDSTEGVYVVPAFVGLGTPYWDSEARGAIFGLSRGTEKEHFIRATIESLCYQTRDVMEAMSKDSGIDVQSLRVDGGAVKNNFIMQFQADIVNTSVERPEIQETTALGAAFLAGLAVGFWESKDDIAKNWKLEEKFDPKMDEGEREKLYRGWKKAVEATQVFKTE.

Residue Thr12 participates in ADP binding. ATP is bound by residues Thr12, Thr13, and Ser14. Thr12 contributes to the sn-glycerol 3-phosphate binding site. Residue Arg16 coordinates ADP. Sn-glycerol 3-phosphate is bound by residues Arg82, Glu83, and Tyr134. Glycerol contacts are provided by Arg82, Glu83, and Tyr134. His230 carries the post-translational modification Phosphohistidine; by HPr. Asp244 provides a ligand contact to sn-glycerol 3-phosphate. Glycerol-binding residues include Asp244 and Gln245. 2 residues coordinate ADP: Thr266 and Gly309. Positions 266, 309, 313, and 410 each coordinate ATP. 2 residues coordinate ADP: Gly410 and Asn414.

This sequence belongs to the FGGY kinase family. Homotetramer and homodimer (in equilibrium). The phosphoenolpyruvate-dependent sugar phosphotransferase system (PTS), including enzyme I, and histidine-containing protein (HPr) are required for the phosphorylation, which leads to the activation of the enzyme.

The catalysed reaction is glycerol + ATP = sn-glycerol 3-phosphate + ADP + H(+). Its pathway is polyol metabolism; glycerol degradation via glycerol kinase pathway; sn-glycerol 3-phosphate from glycerol: step 1/1. Activated by phosphorylation and inhibited by fructose 1,6-bisphosphate (FBP). In terms of biological role, key enzyme in the regulation of glycerol uptake and metabolism. Catalyzes the phosphorylation of glycerol to yield sn-glycerol 3-phosphate. The polypeptide is Glycerol kinase (Staphylococcus aureus (strain MSSA476)).